The primary structure comprises 416 residues: Transcription termination factor Rho (416 aa).

Residues 51-121 (LIYSYGELDI…LKLIYVNGEK (71 aa)) form the Rho RNA-BD domain. ATP contacts are provided by residues 162-167 (GKGQRG), 174-179 (KAGKTT), and Arg-205.

It belongs to the Rho family. In terms of assembly, homohexamer. The homohexamer assembles into an open ring structure.

Its function is as follows. Facilitates transcription termination by a mechanism that involves Rho binding to the nascent RNA, activation of Rho's RNA-dependent ATPase activity, and release of the mRNA from the DNA template. This Streptobacillus moniliformis (strain ATCC 14647 / DSM 12112 / NCTC 10651 / 9901) protein is Transcription termination factor Rho.